The following is a 2209-amino-acid chain: Orsellinic acid synthase armB (2209 aa).

An N-terminal acylcarrier protein transacylase domain (SAT) region spans residues 38–261 (LLLDACYYAF…HKTTVDALYH (224 aa)). One can recognise a Ketosynthase family 3 (KS3) domain in the interval 391-817 (QEPIAICGMS…GSNGALLLEE (427 aa)). Active-site for beta-ketoacyl synthase activity residues include Cys-561, His-696, and His-736. The tract at residues 914–1239 (VFVFSGQGGQ…NLTLSSSLSQ (326 aa)) is malonyl-CoA:ACP transacylase (MAT) domain. Ser-1008 (for acyl/malonyl transferase activity) is an active-site residue. The segment at 1306–1436 (MLQSWAQFPS…GQFRPLLVAD (131 aa)) is N-terminal hotdog fold. The region spanning 1306 to 1613 (MLQSWAQFPS…FKKLRLNTLQ (308 aa)) is the PKS/mFAS DH domain. The product template (PT) domain stretch occupies residues 1335-1610 (ITGHIVGDVP…GMCFKKLRLN (276 aa)). Residue His-1338 is the Proton acceptor; for dehydratase activity of the active site. Residues 1463 to 1613 (AEVITTRTAY…FKKLRLNTLQ (151 aa)) form a C-terminal hotdog fold region. The active-site Proton donor; for dehydratase activity is the Asp-1524. Carrier domains are found at residues 1659–1734 (VDVQ…SSTI) and 1844–1921 (SSSS…SSKQ). O-(pantetheine 4'-phosphoryl)serine is present on residues Ser-1693 and Ser-1881. Residues 1917–1945 (ISSKQPGKSPKPSEEATMDPDKEEDLSDL) form a disordered region. Acidic residues predominate over residues 1932 to 1943 (ATMDPDKEEDLS). Residues 1962 to 2201 (VPMSVQKSSS…LGAVTQALVD (240 aa)) are thioesterase (TE) domain.

It carries out the reaction 3 malonyl-CoA + acetyl-CoA + 2 H(+) = orsellinate + 3 CO2 + 4 CoA. It participates in secondary metabolite biosynthesis. Non-reducing polyketide synthase, part of the gene cluster that mediates the biosynthesis of melleolides, a range of antifungal and phytotoxic polyketide derivatives composed of an orsellinic acid (OA) moiety esterified to various sesquiterpene alcohols. The first step in melleolides biosynthesis is performed by the delta(6)-protoilludene synthase PRO1 which catalyzes the cyclization of farnesyl diphosphate to protoilludene. The orsellinic acid synthase armB produces OA by condensing acetyl-CoA with 3 malonyl-CoA units in a three-round chain elongation reaction folowed by a C2-C7 ring closure. ArmB further catalyzes the trans-esterification of OA to the various sesquiterpene alcohols resulting from the hydroxylation of protoilludene. The melleolides cluster also includes 5 cytochrome P450 monooxygenases, 4 NAD(+)-dependent oxidoreductases, one flavin-dependent oxidoreductase, and one O-methyltransferase. The cytochrome P450 monooxygenases may be involved in protoilludene hydroxylation to elaborate melleolides with multiple alcohol groups, such as melleolide D, which carries alcohol functionalities at C-4, C-5, C-10, and C-13. The role of the NAD(+)-dependent enzymes remains unknown. Numerous melleolides, including arnamial, show 5'-O-methylation of the aromatic moiety which may be catalyzed by the methyltransferase encoded in the cluster. The flavin-dependent oxidoreductase might represent the dehydrogenase yielding the aldehyde in position 1 of arnamial and other melleolides. Finally, several halogenase localized outside of the cluster (armH1 to armH5), are able to catalyze the transfer of a single chlorine atom to the melleolide backbone, resulting in a 6'-chloromelleolide product. This chain is Orsellinic acid synthase armB, found in Armillaria mellea (Honey mushroom).